A 69-amino-acid polypeptide reads, in one-letter code: uncharacterized protein (69 aa).

The Cytoplasmic portion of the chain corresponds to 1–15; sequence MLLYIVIIVACIISK. A helical transmembrane segment spans residues 16–36; the sequence is LVPNEYWAIHLFFIIMIFMVY. Residues 37–69 are Extracellular-facing; sequence MYEKLDIHQKYQFWNYTMSGLSGHNVQITCKCY. The N-linked (GlcNAc...) asparagine; by host glycan is linked to Asn-51.

It belongs to the asfivirus X69R family.

It localises to the host membrane. This is an uncharacterized protein from Ornithodoros (relapsing fever ticks).